The sequence spans 393 residues: Cytochrome b (393 aa).

4 helical membrane-spanning segments follow: residues 32-52 (FGSLLAFCLVIQIITGVTLAM), 76-98 (WLIRYLHANTASAFFFIVYLHMG), 113-133 (VWTLGVIIFILMIVTAFLGYV), and 179-199 (FFALHFVLPFVLAALALMHLI). Residues His-82 and His-96 each contribute to the heme b site. Heme b-binding residues include His-183 and His-197. His-202 contributes to the a ubiquinone binding site. 4 consecutive transmembrane segments (helical) span residues 226–246 (FIFKDLITIFLFILGLSIFVF), 290–310 (LLGVIAMFAAIVILLVMPFTD), 322–342 (LSKIAYYFFIANFLILMKLGA), and 349–369 (FIEFGQISTVLYFSHFVIIVP).

This sequence belongs to the cytochrome b family. Fungal cytochrome b-c1 complex contains 10 subunits; 3 respiratory subunits, 2 core proteins and 5 low-molecular weight proteins. Cytochrome b-c1 complex is a homodimer. The cofactor is heme b.

It is found in the mitochondrion inner membrane. Functionally, component of the ubiquinol-cytochrome c reductase complex (complex III or cytochrome b-c1 complex) that is part of the mitochondrial respiratory chain. The b-c1 complex mediates electron transfer from ubiquinol to cytochrome c. Contributes to the generation of a proton gradient across the mitochondrial membrane that is then used for ATP synthesis. This Venturia inaequalis (Apple scab fungus) protein is Cytochrome b (COB).